The following is an 863-amino-acid chain: Oleate activated transcription factor 3 (863 aa).

Residues 19 to 47 constitute a DNA-binding region (zn(2)-C6 fungal-type); sequence CTNCKKRKSKCDRTKPCGTCVRLGDVDSC. Polar residues predominate over residues 52 to 63; it reads DSSGQPESSPSL. Residues 52–81 form a disordered region; the sequence is DSSGQPESSPSLNDADPLRKQSTPAERISP.

It belongs to the OAF3 family.

Its subcellular location is the cytoplasm. It localises to the nucleus. The protein resides in the mitochondrion. Transcriptional inhibitor with a significantly increased number of target genes in response to oleate. The polypeptide is Oleate activated transcription factor 3 (OAF3) (Saccharomyces cerevisiae (strain RM11-1a) (Baker's yeast)).